Here is an 87-residue protein sequence, read N- to C-terminus: Small ribosomal subunit protein uS19m (87 aa).

It belongs to the universal ribosomal protein uS19 family.

The protein resides in the mitochondrion. This Dictyostelium citrinum (Slime mold) protein is Small ribosomal subunit protein uS19m (mrps19).